Reading from the N-terminus, the 257-residue chain is Aspartate/glutamate leucyltransferase (257 aa).

Belongs to the R-transferase family. Bpt subfamily.

Its subcellular location is the cytoplasm. It catalyses the reaction N-terminal L-glutamyl-[protein] + L-leucyl-tRNA(Leu) = N-terminal L-leucyl-L-glutamyl-[protein] + tRNA(Leu) + H(+). The catalysed reaction is N-terminal L-aspartyl-[protein] + L-leucyl-tRNA(Leu) = N-terminal L-leucyl-L-aspartyl-[protein] + tRNA(Leu) + H(+). Functionally, functions in the N-end rule pathway of protein degradation where it conjugates Leu from its aminoacyl-tRNA to the N-termini of proteins containing an N-terminal aspartate or glutamate. In Leptospira interrogans serogroup Icterohaemorrhagiae serovar copenhageni (strain Fiocruz L1-130), this protein is Aspartate/glutamate leucyltransferase.